The following is a 583-amino-acid chain: Cationic amino acid transporter 6, chloroplastic (583 aa).

The N-terminal 50 residues, 1–50, are a transit peptide targeting the chloroplast; the sequence is MEVQSSSNNGGHSSFSSLRVYLNSLSATPSRLSRRAISVSTSSDEMSRVR. 14 consecutive transmembrane segments (helical) span residues 63–83, 91–111, 132–152, 186–206, 216–236, 255–275, 294–314, 347–367, 397–417, 418–438, 450–470, 481–501, 509–529, and 541–561; these read WYDL…FVTT, AGPS…LSAF, ITFG…DYVM, GFNE…VIIC, NMIM…MGFI, FFPF…LSYI, IPVG…LMAV, VVGI…MLGQ, ASTF…LNVL, LNLV…ALIF, WPTL…TLIW, FMLG…QCVV, LWGV…NIFL, and FGFF…HASS.

Belongs to the amino acid-polyamine-organocation (APC) superfamily. Cationic amino acid transporter (CAT) (TC 2.A.3.3) family. Expressed in roots, stems, flowers, and leaves.

It is found in the plastid. It localises to the chloroplast membrane. Its function is as follows. Permease involved in the transport of the cationic neutral or acidic amino acids. This is Cationic amino acid transporter 6, chloroplastic (CAT6) from Arabidopsis thaliana (Mouse-ear cress).